A 411-amino-acid polypeptide reads, in one-letter code: 2,3-bisphosphoglycerate-independent phosphoglycerate mutase (411 aa).

The protein belongs to the BPG-independent phosphoglycerate mutase family. A-PGAM subfamily.

The catalysed reaction is (2R)-2-phosphoglycerate = (2R)-3-phosphoglycerate. It participates in carbohydrate degradation; glycolysis; pyruvate from D-glyceraldehyde 3-phosphate: step 3/5. Catalyzes the interconversion of 2-phosphoglycerate and 3-phosphoglycerate. In Pyrobaculum neutrophilum (strain DSM 2338 / JCM 9278 / NBRC 100436 / V24Sta) (Thermoproteus neutrophilus), this protein is 2,3-bisphosphoglycerate-independent phosphoglycerate mutase.